The chain runs to 415 residues: Gamma-glutamyl phosphate reductase (415 aa).

It belongs to the gamma-glutamyl phosphate reductase family.

It is found in the cytoplasm. It catalyses the reaction L-glutamate 5-semialdehyde + phosphate + NADP(+) = L-glutamyl 5-phosphate + NADPH + H(+). Its pathway is amino-acid biosynthesis; L-proline biosynthesis; L-glutamate 5-semialdehyde from L-glutamate: step 2/2. Catalyzes the NADPH-dependent reduction of L-glutamate 5-phosphate into L-glutamate 5-semialdehyde and phosphate. The product spontaneously undergoes cyclization to form 1-pyrroline-5-carboxylate. The polypeptide is Gamma-glutamyl phosphate reductase (Parabacteroides distasonis (strain ATCC 8503 / DSM 20701 / CIP 104284 / JCM 5825 / NCTC 11152)).